The sequence spans 673 residues: DNA ligase (673 aa).

NAD(+) contacts are provided by residues 34 to 38 (DAEYD), 83 to 84 (SL), and glutamate 116. Catalysis depends on lysine 118, which acts as the N6-AMP-lysine intermediate. The NAD(+) site is built by arginine 139, glutamate 176, lysine 293, and lysine 317. Zn(2+) is bound by residues cysteine 411, cysteine 414, cysteine 429, and cysteine 435. Residues 595 to 673 (NQQNPFFGKT…EDEFLKWVNS (79 aa)) enclose the BRCT domain.

Belongs to the NAD-dependent DNA ligase family. LigA subfamily. Mg(2+) serves as cofactor. It depends on Mn(2+) as a cofactor.

It catalyses the reaction NAD(+) + (deoxyribonucleotide)n-3'-hydroxyl + 5'-phospho-(deoxyribonucleotide)m = (deoxyribonucleotide)n+m + AMP + beta-nicotinamide D-nucleotide.. Its function is as follows. DNA ligase that catalyzes the formation of phosphodiester linkages between 5'-phosphoryl and 3'-hydroxyl groups in double-stranded DNA using NAD as a coenzyme and as the energy source for the reaction. It is essential for DNA replication and repair of damaged DNA. The chain is DNA ligase from Legionella pneumophila subsp. pneumophila (strain Philadelphia 1 / ATCC 33152 / DSM 7513).